A 147-amino-acid polypeptide reads, in one-letter code: D-aminoacyl-tRNA deacylase (147 aa).

The short motif at 136–137 (GP) is the Gly-cisPro motif, important for rejection of L-amino acids element.

This sequence belongs to the DTD family. As to quaternary structure, homodimer.

It is found in the cytoplasm. The enzyme catalyses glycyl-tRNA(Ala) + H2O = tRNA(Ala) + glycine + H(+). It catalyses the reaction a D-aminoacyl-tRNA + H2O = a tRNA + a D-alpha-amino acid + H(+). In terms of biological role, an aminoacyl-tRNA editing enzyme that deacylates mischarged D-aminoacyl-tRNAs. Also deacylates mischarged glycyl-tRNA(Ala), protecting cells against glycine mischarging by AlaRS. Acts via tRNA-based rather than protein-based catalysis; rejects L-amino acids rather than detecting D-amino acids in the active site. By recycling D-aminoacyl-tRNA to D-amino acids and free tRNA molecules, this enzyme counteracts the toxicity associated with the formation of D-aminoacyl-tRNA entities in vivo and helps enforce protein L-homochirality. The protein is D-aminoacyl-tRNA deacylase of Streptococcus agalactiae serotype Ia (strain ATCC 27591 / A909 / CDC SS700).